A 103-amino-acid chain; its full sequence is uncharacterized protein (103 aa).

Positions 1–21 (MTGFKVSSFFYILALSRFFNA) are cleaved as a signal peptide.

This is an uncharacterized protein from Saccharomyces cerevisiae (strain ATCC 204508 / S288c) (Baker's yeast).